Consider the following 314-residue polypeptide: 4-hydroxy-3-methylbut-2-enyl diphosphate reductase (314 aa).

Cysteine 12 serves as a coordination point for [4Fe-4S] cluster. (2E)-4-hydroxy-3-methylbut-2-enyl diphosphate-binding residues include histidine 41 and histidine 74. Histidine 41 and histidine 74 together coordinate dimethylallyl diphosphate. Positions 41 and 74 each coordinate isopentenyl diphosphate. Residue cysteine 96 coordinates [4Fe-4S] cluster. Residue histidine 124 participates in (2E)-4-hydroxy-3-methylbut-2-enyl diphosphate binding. Dimethylallyl diphosphate is bound at residue histidine 124. Histidine 124 provides a ligand contact to isopentenyl diphosphate. The active-site Proton donor is glutamate 126. Threonine 167 is a (2E)-4-hydroxy-3-methylbut-2-enyl diphosphate binding site. [4Fe-4S] cluster is bound at residue cysteine 197. Positions 225, 226, 227, and 269 each coordinate (2E)-4-hydroxy-3-methylbut-2-enyl diphosphate. Serine 225, serine 226, asparagine 227, and serine 269 together coordinate dimethylallyl diphosphate. Residues serine 225, serine 226, asparagine 227, and serine 269 each coordinate isopentenyl diphosphate.

Belongs to the IspH family. Requires [4Fe-4S] cluster as cofactor.

The catalysed reaction is isopentenyl diphosphate + 2 oxidized [2Fe-2S]-[ferredoxin] + H2O = (2E)-4-hydroxy-3-methylbut-2-enyl diphosphate + 2 reduced [2Fe-2S]-[ferredoxin] + 2 H(+). It catalyses the reaction dimethylallyl diphosphate + 2 oxidized [2Fe-2S]-[ferredoxin] + H2O = (2E)-4-hydroxy-3-methylbut-2-enyl diphosphate + 2 reduced [2Fe-2S]-[ferredoxin] + 2 H(+). Its pathway is isoprenoid biosynthesis; dimethylallyl diphosphate biosynthesis; dimethylallyl diphosphate from (2E)-4-hydroxy-3-methylbutenyl diphosphate: step 1/1. The protein operates within isoprenoid biosynthesis; isopentenyl diphosphate biosynthesis via DXP pathway; isopentenyl diphosphate from 1-deoxy-D-xylulose 5-phosphate: step 6/6. Catalyzes the conversion of 1-hydroxy-2-methyl-2-(E)-butenyl 4-diphosphate (HMBPP) into a mixture of isopentenyl diphosphate (IPP) and dimethylallyl diphosphate (DMAPP). Acts in the terminal step of the DOXP/MEP pathway for isoprenoid precursor biosynthesis. The protein is 4-hydroxy-3-methylbut-2-enyl diphosphate reductase of Actinobacillus pleuropneumoniae serotype 7 (strain AP76).